The following is a 384-amino-acid chain: Transcription factor TGA3 (384 aa).

Disordered stretches follow at residues 36–70 (KSDI…NNRV) and 76–95 (YNNS…EDRI). Residues 39-55 (INNITSNQNNNQSSSTT) show a composition bias toward low complexity. Residues 58-68 (VDARPEADDNN) are compositionally biased toward basic and acidic residues. The span at 76-88 (YNNSLEAEPSSNN) shows a compositional bias: polar residues. Residues 96 to 138 (NDKMKRRLAQNREAARKSRLRKKAHVQQLEESRLKLSQLEQEL) form the bZIP domain. Residues 98–118 (KMKRRLAQNREAARKSRLRKK) are basic motif. The short motif at 99 to 106 (MKRRLAQN) is the Nuclear localization signal element. The stretch at 117 to 144 (KKAHVQQLEESRLKLSQLEQELVRARQQ) forms a coiled coil. A leucine-zipper region spans residues 124–138 (LEESRLKLSQLEQEL). Positions 167–379 (IAAFEMEYTH…RALSSLWAAR (213 aa)) constitute a DOG1 domain. Hexadecanoate contacts are provided by K219, R236, and F249. A coiled-coil region spans residues 267–296 (DQQLLEVRNLQQSSQQAEEALSQGLDKLQQ).

Belongs to the bZIP family. As to quaternary structure, binds DNA as a dimer. Interacts with NPR3, NPR4 and sumoylated NPR1. Interacts with GRXC7/ROXY1. Expressed in the whole plant.

It localises to the nucleus. Transcriptional activator that binds specifically to the DNA sequence 5'-TGACG-3'. Recognizes ocs elements like the as-1 motif of the cauliflower mosaic virus 35S promoter. Binding to the as-1-like cis elements mediate auxin- and salicylic acid-inducible transcription. Required to induce the systemic acquired resistance (SAR) via the regulation of pathogenesis-related genes expression. Binding to the as-1 element of PR-1 promoter is salicylic acid-inducible and mediated by sumoylated NPR1. Could also bind to the Hex-motif (5'-TGACGTGG-3') another cis-acting element found in plant histone promoters. This is Transcription factor TGA3 from Arabidopsis thaliana (Mouse-ear cress).